The following is an 898-amino-acid chain: Tight junction protein ZO-3 (898 aa).

Positions 11 to 93 (TATLCRDPRR…LANITVKRPR (83 aa)) constitute a PDZ 1 domain. Residues 98 to 165 (PATKAGTSGR…SPGGNSEANG (68 aa)) are disordered. A phosphoserine mark is found at serine 128, serine 156, serine 161, serine 195, and serine 313. Positions 187-264 (SVLVRRTESE…KLTLLVLRDR (78 aa)) constitute a PDZ 2 domain. The tract at residues 295 to 368 (LSQAVPSHVP…QSAEDRGYSP (74 aa)) is disordered. Over residues 312 to 349 (RSLDSDGTDSPRDSPPLRRENSLDSRTISEPDAPRHSS) the composition is skewed to basic and acidic residues. Threonine 319 carries the post-translational modification Phosphothreonine. 2 positions are modified to phosphoserine: serine 321 and serine 360. The PDZ 3 domain occupies 369–435 (DSRVVRFHKG…LTREEAVQFL (67 aa)). The SH3 domain maps to 464 to 538 (GDSFYIRTHF…PNQSRAEQLA (75 aa)). One can recognise a Guanylate kinase-like domain in the interval 569-750 (LRRGAKKSTQ…WYQELKAVVR (182 aa)). Phosphoserine is present on serine 580. A disordered region spans residues 759–898 (TAEDQLDNSS…GYDWGPATDL (140 aa)). Acidic residues predominate over residues 762-772 (DQLDNSSEDNL). Residues 780–790 (ADSSADLSCDS) are compositionally biased toward low complexity. Residues 796–814 (YETDGEGYTDGEGYTDVDE) are compositionally biased toward acidic residues. The segment covering 831–841 (EEPRSPRDHGR) has biased composition (basic and acidic residues). Phosphoserine is present on residues serine 835, serine 884, and serine 885.

The protein belongs to the MAGUK family. Heterodimer with TJP1. Interacts with UBN1. Interacts with occludin OCLN and claudins. Interacts with PATJ. Interacts with FASLG. Interacts with CCND1. In terms of processing, phosphorylated.

The protein localises to the cell membrane. Its subcellular location is the cell junction. The protein resides in the tight junction. It localises to the nucleus. TJP1, TJP2, and TJP3 are closely related scaffolding proteins that link tight junction (TJ) transmembrane proteins such as claudins, junctional adhesion molecules, and occludin to the actin cytoskeleton. The tight junction acts to limit movement of substances through the paracellular space and as a boundary between the compositionally distinct apical and basolateral plasma membrane domains of epithelial and endothelial cells. Binds and recruits PATJ to tight junctions where it connects and stabilizes apical and lateral components of tight junctions. Promotes cell-cycle progression through the sequestration of cyclin D1 (CCND1) at tight junctions during mitosis which prevents CCND1 degradation during M-phase and enables S-phase transition. With TJP1 and TJP2, participates in the junctional retention and stability of the transcription factor DBPA, but is not involved in its shuttling to the nucleus. Contrary to TJP2, TJP3 is dispensable for individual viability, embryonic development, epithelial differentiation, and the establishment of TJs, at least in the laboratory environment. The sequence is that of Tight junction protein ZO-3 (TJP3) from Canis lupus familiaris (Dog).